The following is a 207-amino-acid chain: MMLIKKIEELKNSEIKDIIDKRIQEFKSFKNKSNEEWFKELCFCILTANFTAEGGIRIQKEIGDGFLTLPREELEEKLKNLGHRFYRKRAEYIVLARRFKNIKDIVESFENEKVAREFLVRNIKGIGYKEASHFLRNVGYDDVAIIDRHILRELYENNYIDEIPKTLSRRKYLEIENILRDIGEEVNLKLSELDLYIWYLRTGKVLK.

Residues lysine 129 and aspartate 147 contribute to the active site.

The protein belongs to the type-2 OGG1 family.

It catalyses the reaction 2'-deoxyribonucleotide-(2'-deoxyribose 5'-phosphate)-2'-deoxyribonucleotide-DNA = a 3'-end 2'-deoxyribonucleotide-(2,3-dehydro-2,3-deoxyribose 5'-phosphate)-DNA + a 5'-end 5'-phospho-2'-deoxyribonucleoside-DNA + H(+). Catalyzes the excision of an oxidatively damaged form of guanine (7,8-dihydro-8-oxoguanine = 8-oxoG) from DNA. Also cleaves the DNA backbone at apurinic/apyrimidinic sites (AP sites). Has little specificity for the base opposite oxoG. The protein is 8-oxoguanine DNA glycosylase/AP lyase of Methanocaldococcus jannaschii (strain ATCC 43067 / DSM 2661 / JAL-1 / JCM 10045 / NBRC 100440) (Methanococcus jannaschii).